The primary structure comprises 537 residues: Lariat debranching enzyme (537 aa).

4 residues coordinate a divalent metal cation: C8, H10, D39, and N84. Residues 124–154 form a lariat recognition loop region; sequence SGIYKGHDFLRGHHEFPPYTESTCRSVYHVR. A divalent metal cation-binding residues include H174, H226, and H228. Disordered stretches follow at residues 242–272 and 473–537; these read KAPT…SRLP and TAAE…EDDD. The segment covering 251 to 260 has biased composition (low complexity); it reads SSSSSSSSSS.

It belongs to the lariat debranching enzyme family. It depends on Fe(2+) as a cofactor. Zn(2+) is required as a cofactor. Requires Mn(2+) as cofactor.

It is found in the nucleus. With respect to regulation, active in presence of diverse metals including Fe(2+), Zn(2+), Mn(2+). Binds two metal cations in two adjacent alpha and beta metal-binding pockets. Cleaves the 2'-5' phosphodiester linkage at the branch point of lariat intron pre-mRNAs after splicing and converts them into linear molecules that are subsequently degraded. It thereby facilitates ribonucleotide turnover. This is Lariat debranching enzyme (DBR1) from Drosophila pseudoobscura pseudoobscura (Fruit fly).